The primary structure comprises 506 residues: MAEESRGQRGSGYGLGLSTRTQVTGYQFLARRTAMALTRWRVRMEIEPGRRQTLAVVASVSAALVICLGALLWSFISPSGQLNESPIIADRDSGALYVRVGDRLYPALNLASARLITGRPDNPHLVRSSQIATMPRGPLVGIPGAPSSFSPKSPPASSWLVCDTVATSSSIGSLQGVTVTVIDGTPDLTGHRQILSGSDAVVLRYGGDAWVIREGRRSRIEPTNRAVLLPLGLTPEQVSQARPMSRALFDALPVGPELLVPEVPNAGGPATFPGAPGPIGTVIVTPQISGPQQYSLVLGDGVQTLPPLVAQILQNAGSAGNTKPLTVEPSTLAKMPVVNRLDLSAYPDNPLEVVDIREHPSTCWWWERTAGENRARVRVVSGPTIPVAATEMNKVVSLVKADTSGRQADQVYFGPDHANFVAVTGNNPGAQTSESLWWVTDAGARFGVEDSKEARDALGLTLTPSLAPWVALRLLPQGPTLSRADALVEHDTLPMDMTPAELVVPK.

Residues 56 to 76 (VVASVSAALVICLGALLWSFI) form a helical membrane-spanning segment.

This sequence belongs to the EccB family. In terms of assembly, part of the ESX-5 / type VII secretion system (T7SS), which is composed of cytosolic and membrane components. The ESX-5 membrane complex is composed of EccB5, EccC5, EccD5 and EccE5.

The protein resides in the cell inner membrane. Functionally, an ATPase. Part of the ESX-5 specialized secretion system, which is responsible for the secretion of EsxN and a number of PE_PGRS and PPE proteins, including PPE41. The chain is ESX-5 secretion system ATPase EccB5 from Mycobacterium tuberculosis (strain CDC 1551 / Oshkosh).